We begin with the raw amino-acid sequence, 110 residues long: MAAWSPAAAVPLLRGTRRLPLLHWAQRMFASQTEAELKVTQILKEKFPRATAIKVTDISGGCGAMYEIKIESEEFKEKRTVQQHQMVNQALKEEIKGMHGLRIFTSVPKH.

Belongs to the BolA/IbaG family. As to quaternary structure, interacts with NFU1.

It localises to the mitochondrion. Functionally, acts as a mitochondrial iron-sulfur (Fe-S) cluster assembly factor that facilitates (Fe-S) cluster insertion into a subset of mitochondrial proteins. Probably acts together with NFU1. This chain is BolA-like protein 3 (BOLA3), found in Bos taurus (Bovine).